A 358-amino-acid chain; its full sequence is DNA replication and repair protein RecF (358 aa).

30-37 contacts ATP; sequence GNNGSGKT.

It belongs to the RecF family.

It is found in the cytoplasm. In terms of biological role, the RecF protein is involved in DNA metabolism; it is required for DNA replication and normal SOS inducibility. RecF binds preferentially to single-stranded, linear DNA. It also seems to bind ATP. The polypeptide is DNA replication and repair protein RecF (Histophilus somni (strain 2336) (Haemophilus somnus)).